The sequence spans 192 residues: UPF0312 protein Spro_1887 (192 aa).

Positions 1 to 23 (MLKKTVLGLTAGAMLLSAGSALA) are cleaved as a signal peptide.

Belongs to the UPF0312 family. Type 1 subfamily.

The protein localises to the periplasm. This chain is UPF0312 protein Spro_1887, found in Serratia proteamaculans (strain 568).